The primary structure comprises 132 residues: Small ribosomal subunit protein uS8 (132 aa).

Belongs to the universal ribosomal protein uS8 family. Part of the 30S ribosomal subunit. Contacts proteins S5 and S12.

In terms of biological role, one of the primary rRNA binding proteins, it binds directly to 16S rRNA central domain where it helps coordinate assembly of the platform of the 30S subunit. This is Small ribosomal subunit protein uS8 from Afipia carboxidovorans (strain ATCC 49405 / DSM 1227 / KCTC 32145 / OM5) (Oligotropha carboxidovorans).